Consider the following 66-residue polypeptide: Beta-mammal toxin Co3 (66 aa).

In terms of domain architecture, LCN-type CS-alpha/beta spans 1–66 (KEGYIVNYYD…VWPLPNKTCN (66 aa)). 4 disulfide bridges follow: C12-C65, C16-C41, C25-C46, and C29-C48.

As to expression, expressed by the venom gland.

It is found in the secreted. Its function is as follows. Beta toxins bind voltage-independently at site-4 of sodium channels (Nav) and shift the voltage of activation toward more negative potentials thereby affecting sodium channel activation and promoting spontaneous and repetitive firing. This toxin acts on human Nav1.2/SCN2A, Nav1.4/SCN4A and Nav1.6/SCN8A voltage-gated sodium channels. Also, it reduces the peak of sodium currents in Nav1.5/SCN5A at all potentials. In vivo, is lethal to mice when intraperitoneally injected at a dose of 5ug. No activity is observed when injected into crickets or woodlice. This Centruroides ornatus (Scorpion) protein is Beta-mammal toxin Co3.